The primary structure comprises 577 residues: Arginine--tRNA ligase (577 aa).

The short motif at 122 to 132 is the 'HIGH' region element; that stretch reads PNVAKEMHVGH.

The protein belongs to the class-I aminoacyl-tRNA synthetase family. As to quaternary structure, monomer.

It localises to the cytoplasm. It catalyses the reaction tRNA(Arg) + L-arginine + ATP = L-arginyl-tRNA(Arg) + AMP + diphosphate. This is Arginine--tRNA ligase from Salmonella paratyphi A (strain ATCC 9150 / SARB42).